The primary structure comprises 346 residues: NADH-ubiquinone oxidoreductase chain 2 (346 aa).

10 helical membrane-spanning segments follow: residues 25–45 (HWVL…PLIS), 60–80 (FLTQ…NAWA), 95–115 (CLLL…HFWF), 124–144 (LMTA…LLLM), 149–169 (LNPA…GWMG), 178–195 (ILAF…IILV), 200–219 (LALL…FMAL), 247–267 (VLLS…WLII), 274–294 (EMTP…FFYL), and 326–346 (AILA…HAIV).

The protein belongs to the complex I subunit 2 family.

It is found in the mitochondrion inner membrane. The catalysed reaction is a ubiquinone + NADH + 5 H(+)(in) = a ubiquinol + NAD(+) + 4 H(+)(out). Functionally, core subunit of the mitochondrial membrane respiratory chain NADH dehydrogenase (Complex I) that is believed to belong to the minimal assembly required for catalysis. Complex I functions in the transfer of electrons from NADH to the respiratory chain. The immediate electron acceptor for the enzyme is believed to be ubiquinone. The sequence is that of NADH-ubiquinone oxidoreductase chain 2 (MT-ND2) from Anas capensis (Cape teal).